Here is a 223-residue protein sequence, read N- to C-terminus: Protein FAM3D (223 aa).

The signal sequence occupies residues 1–25; it reads MRVAGLIRVVVFIFTIVTMWVFLRS. 2 disulfides stabilise this stretch: C54/C82 and C60/C217. One can recognise a GG-type lectin domain in the interval 62 to 221; sequence NNFFAFKISS…LELEGCVPRK (160 aa). N106 carries an N-linked (GlcNAc...) asparagine glycan.

It belongs to the FAM3 family.

It is found in the secreted. The polypeptide is Protein FAM3D (Mus musculus (Mouse)).